Consider the following 660-residue polypeptide: UvrABC system protein C (660 aa).

Positions 16–95 (ESPGVYRFRD…IKQYDPRFNV (80 aa)) constitute a GIY-YIG domain. The region spanning 208–243 (DAMVRRLEREMAEASAELEFERAARLRDDLAALRRA) is the UVR domain. The interval 469 to 501 (GEAGVESAGDPDAPAGPDAPDEPRVGTLVDPTT) is disordered. A compositionally biased stretch (low complexity) spans 476–486 (AGDPDAPAGPD).

This sequence belongs to the UvrC family. In terms of assembly, interacts with UvrB in an incision complex.

It localises to the cytoplasm. In terms of biological role, the UvrABC repair system catalyzes the recognition and processing of DNA lesions. UvrC both incises the 5' and 3' sides of the lesion. The N-terminal half is responsible for the 3' incision and the C-terminal half is responsible for the 5' incision. The polypeptide is UvrABC system protein C (Salinispora arenicola (strain CNS-205)).